A 221-amino-acid chain; its full sequence is Transcription repressor OFP8 (221 aa).

Positions Glu124–Asp138 are enriched in acidic residues. A disordered region spans residues Glu124 to Ser147. Residues Val158 to Thr217 form the OVATE domain.

In terms of tissue distribution, expressed in roots, rosette and cauline leaves, shoots, stems, flower buds and siliques.

Its subcellular location is the nucleus. In terms of biological role, transcriptional repressor that regulates multiple aspects of plant growth and development through the regulation of BEL1-LIKE (BLH) and KNOX TALE (KNAT) homeodomain transcription factors. The polypeptide is Transcription repressor OFP8 (OFP8) (Arabidopsis thaliana (Mouse-ear cress)).